A 481-amino-acid polypeptide reads, in one-letter code: Glycogen synthase (481 aa).

An ADP-alpha-D-glucose-binding site is contributed by Lys15.

The protein belongs to the glycosyltransferase 1 family. Bacterial/plant glycogen synthase subfamily.

The enzyme catalyses [(1-&gt;4)-alpha-D-glucosyl](n) + ADP-alpha-D-glucose = [(1-&gt;4)-alpha-D-glucosyl](n+1) + ADP + H(+). Its pathway is glycan biosynthesis; glycogen biosynthesis. In terms of biological role, synthesizes alpha-1,4-glucan chains using ADP-glucose. The protein is Glycogen synthase of Mesorhizobium japonicum (strain LMG 29417 / CECT 9101 / MAFF 303099) (Mesorhizobium loti (strain MAFF 303099)).